The primary structure comprises 400 residues: ELAV-like protein 4 (400 aa).

The interval threonine 12 to aspartate 48 is disordered. Residues serine 18–serine 33 show a composition bias toward low complexity. The span at arginine 34–alanine 44 shows a compositional bias: polar residues. RRM domains follow at residues threonine 51–proline 158, alanine 166–asparagine 246, and tryptophan 317–asparagine 395.

The protein belongs to the RRM elav family.

It localises to the cytoplasm. Its subcellular location is the perikaryon. The protein resides in the cell projection. It is found in the axon. The protein localises to the dendrite. It localises to the growth cone. Functionally, RNA-binding protein that is involved in the post-transcriptional regulation of mRNAs. Plays a role in the regulation of mRNA stability, alternative splicing and translation. Binds to AU-rich element (ARE) sequences in the 3' untranslated region (3'UTR) of target mRNAs. Mainly plays a role in neuron-specific RNA processing. The sequence is that of ELAV-like protein 4 (elavl4) from Xenopus tropicalis (Western clawed frog).